Here is a 534-residue protein sequence, read N- to C-terminus: Potential RNA-dependent RNA polymerase (534 aa).

The RdRp catalytic domain maps to 255 to 373; the sequence is DVVVCTDFSK…TYPGISAEDV (119 aa).

It is found in the virion. It catalyses the reaction RNA(n) + a ribonucleoside 5'-triphosphate = RNA(n+1) + diphosphate. Functionally, RNA-directed RNA polymerase that is involved in both transcription and genome replication. The polypeptide is Potential RNA-dependent RNA polymerase (Segment-2) (Human picobirnavirus (strain Human/Thailand/Hy005102/-) (PBV)).